Here is a 116-residue protein sequence, read N- to C-terminus: MSVESFTPTALQFTQGAAHKVKTLVDEEGNDRLKLRVFVTGGGCSGFQYGFTFDEEVAEDDTIVEREGVSLVVDPMSFQYLAGAEVDYQEGLEGSRFVIKNPNATTTCGCGSSFSI.

Cys-44, Cys-108, and Cys-110 together coordinate iron-sulfur cluster.

This sequence belongs to the HesB/IscA family. As to quaternary structure, homodimer. Iron-sulfur cluster serves as cofactor.

Functionally, required for insertion of 4Fe-4S clusters for at least IspG. The sequence is that of Iron-sulfur cluster insertion protein ErpA from Pseudomonas fluorescens (strain ATCC BAA-477 / NRRL B-23932 / Pf-5).